The following is a 56-amino-acid chain: Large ribosomal subunit protein bL32 (56 aa).

Residues 1–26 (MAVQKSKVTRSRRGQRRSHDALTAAA) are disordered. Over residues 7–16 (KVTRSRRGQR) the composition is skewed to basic residues.

It belongs to the bacterial ribosomal protein bL32 family.

This Moritella marina (Vibrio marinus) protein is Large ribosomal subunit protein bL32 (rpmF).